We begin with the raw amino-acid sequence, 1060 residues long: Carbamoyl phosphate synthase large chain (1060 aa).

Residues 1-401 (MPKRTDIKKI…SLLKAVRSLE (401 aa)) form a carboxyphosphate synthetic domain region. 12 residues coordinate ATP: R129, R169, G175, G176, K208, I210, E215, G241, I242, H243, Q284, and E298. In terms of domain architecture, ATP-grasp 1 spans 133–327 (KQLMEELEQP…IAKLAAKIAV (195 aa)). 3 residues coordinate Mg(2+): Q284, E298, and N300. Mn(2+) contacts are provided by Q284, E298, and N300. The interval 402–546 (IGAYHNELAE…YSTYEVENES (145 aa)) is oligomerization domain. Residues 547-929 (NVSKKPSVLV…ALYKAFEASG (383 aa)) form a carbamoyl phosphate synthetic domain region. Positions 671–861 (EQALQELAIP…MAQVATKAIL (191 aa)) constitute an ATP-grasp 2 domain. ATP-binding residues include R707, S746, L748, E752, G777, V778, H779, S780, Q820, and E832. Mg(2+) contacts are provided by Q820, E832, and N834. Residues Q820, E832, and N834 each coordinate Mn(2+). An MGS-like domain is found at 930-1060 (LHLPSYGAVL…ESRAFTTEAI (131 aa)). The tract at residues 930–1060 (LHLPSYGAVL…ESRAFTTEAI (131 aa)) is allosteric domain.

It belongs to the CarB family. In terms of assembly, composed of two chains; the small (or glutamine) chain promotes the hydrolysis of glutamine to ammonia, which is used by the large (or ammonia) chain to synthesize carbamoyl phosphate. Tetramer of heterodimers (alpha,beta)4. Requires Mg(2+) as cofactor. The cofactor is Mn(2+).

The catalysed reaction is hydrogencarbonate + L-glutamine + 2 ATP + H2O = carbamoyl phosphate + L-glutamate + 2 ADP + phosphate + 2 H(+). The enzyme catalyses hydrogencarbonate + NH4(+) + 2 ATP = carbamoyl phosphate + 2 ADP + phosphate + 2 H(+). It participates in amino-acid biosynthesis; L-arginine biosynthesis; carbamoyl phosphate from bicarbonate: step 1/1. It functions in the pathway pyrimidine metabolism; UMP biosynthesis via de novo pathway; (S)-dihydroorotate from bicarbonate: step 1/3. Its function is as follows. Large subunit of the glutamine-dependent carbamoyl phosphate synthetase (CPSase). CPSase catalyzes the formation of carbamoyl phosphate from the ammonia moiety of glutamine, carbonate, and phosphate donated by ATP, constituting the first step of 2 biosynthetic pathways, one leading to arginine and/or urea and the other to pyrimidine nucleotides. The large subunit (synthetase) binds the substrates ammonia (free or transferred from glutamine from the small subunit), hydrogencarbonate and ATP and carries out an ATP-coupled ligase reaction, activating hydrogencarbonate by forming carboxy phosphate which reacts with ammonia to form carbamoyl phosphate. The protein is Carbamoyl phosphate synthase large chain of Enterococcus faecalis (strain ATCC 700802 / V583).